A 462-amino-acid chain; its full sequence is L-seryl-tRNA(Sec) selenium transferase (462 aa).

Residue Lys-293 is modified to N6-(pyridoxal phosphate)lysine.

This sequence belongs to the SelA family. Requires pyridoxal 5'-phosphate as cofactor.

The protein localises to the cytoplasm. It carries out the reaction L-seryl-tRNA(Sec) + selenophosphate + H(+) = L-selenocysteinyl-tRNA(Sec) + phosphate. The protein operates within aminoacyl-tRNA biosynthesis; selenocysteinyl-tRNA(Sec) biosynthesis; selenocysteinyl-tRNA(Sec) from L-seryl-tRNA(Sec) (bacterial route): step 1/1. Functionally, converts seryl-tRNA(Sec) to selenocysteinyl-tRNA(Sec) required for selenoprotein biosynthesis. This chain is L-seryl-tRNA(Sec) selenium transferase, found in Clostridium botulinum (strain ATCC 19397 / Type A).